The sequence spans 595 residues: MLSLSSPPWLLLLVLFFFANGSATVVSLAENVTLATLPSTSPISVSFSTTSSVVAPISTELENQTASSSNLNTNNEASDEQTGNSNSNTSSHSRNINGLPSSNSNIDNANSNSSSVSSLSTTTSAISGVDQQESLILATPTALNGSGTPPEHQTIGQAPPTKGEQEAILRALDWLKEKRASDYGWGNDTHVVILAKELSGGRDPNDSVDGHVQVIQELEDTLSVKEMEIEILAMLDRHHTLPKPLDLDKLARYVLALGSLCKDPKHFHGHDLVATLQHHEPAQDIEFALTTLSACSSAAHVRKRQIRRLLDIASGVTDQSVDAIAMVILALRCIVTDHRHRHLQHFVRRPARGLATLQDQRGSFGSLRSTALAMQALQDLEYDPAGHWNRTAASRYILSRQRADGGWSEEPLQDGQEPDIGVGLTADIILALGWKGLGAVRALQCDHVIRESSDPTENGEPKLAVPFGLSSSAEESDAKNISYTYTLWVGSNVTESFSLSLVSPKNTSFFKAMTQAAEMDPRFIFEAREWPNGHYVHTLYGKKEEPRGYHYWLLYRLPELPDPNNTPGNQLIAPVGVDELMVEDGEHYLYWYKKL.

The first 23 residues, 1 to 23, serve as a signal peptide directing secretion; the sequence is MLSLSSPPWLLLLVLFFFANGSA. N-linked (GlcNAc...) asparagine glycans are attached at residues N31, N63, N88, N112, N144, N187, N205, N389, N480, N492, and N506. Positions 61–83 are enriched in polar residues; the sequence is LENQTASSSNLNTNNEASDEQTG. 2 disordered regions span residues 61–119 and 141–164; these read LENQ…VSSL and TALN…TKGE. The span at 84–119 shows a compositional bias: low complexity; it reads NSNSNTSSHSRNINGLPSSNSNIDNANSNSSSVSSL.

It is found in the secreted. This is an uncharacterized protein from Drosophila melanogaster (Fruit fly).